The following is a 385-amino-acid chain: Nod factor hydrolase protein 1 (385 aa).

The N-terminal stretch at 1 to 21 (MANFLKLKQFLTLVLILLALA) is a signal peptide. Positions 36-385 (RVKGIYWIEN…TASKAWRPES (350 aa)) constitute a GH18 domain. N-linked (GlcNAc...) asparagine glycans are attached at residues asparagine 115 and asparagine 134. Glutamate 153 serves as the catalytic Proton donor. Asparagine 233 and asparagine 247 each carry an N-linked (GlcNAc...) asparagine glycan.

Belongs to the glycosyl hydrolase 18 family. Chitinase class V subfamily.

Symbiotic enzyme that hydrolytically inactivates Nod factors (NFs) with a C16:2 acyl chain produced by the microsymbiont Sinorhizobium meliloti. NFs are lipo-chitooligosaccharide signaling molecules produced by nitrogen-fixing rhizobia to initiate nodulation (symbiosis) on the roots of legumes. Controls NF hydrolysis at the stage of root hair infection. Involved in the regulation of growth and branching of mature nodules. Modulates NF levels and signaling to complete transition of infected nodules to functional nitrogen-fixing organs. Lacks chitinase activity in vitro toward glycol chitin, carboxymethyl-chitin, colloidal chitin, and the chitin oligosaccharides (N-acetylglucosamine) (GlcNAc)6 and (GlcNAc)5. This is Nod factor hydrolase protein 1 from Medicago truncatula (Barrel medic).